Reading from the N-terminus, the 418-residue chain is Tyrosine--tRNA ligase (418 aa).

Tyrosine 34 provides a ligand contact to L-tyrosine. The 'HIGH' region motif lies at 39–48 (PTADSLHLGH). Residues tyrosine 169 and glutamine 173 each coordinate L-tyrosine. Residues 229–233 (KFGKS) carry the 'KMSKS' region motif. Residue lysine 232 participates in ATP binding. In terms of domain architecture, S4 RNA-binding spans 352–418 (LNLVDMLVTA…GKKKYAVLTY (67 aa)).

It belongs to the class-I aminoacyl-tRNA synthetase family. TyrS type 1 subfamily. In terms of assembly, homodimer.

It is found in the cytoplasm. It catalyses the reaction tRNA(Tyr) + L-tyrosine + ATP = L-tyrosyl-tRNA(Tyr) + AMP + diphosphate + H(+). In terms of biological role, catalyzes the attachment of tyrosine to tRNA(Tyr) in a two-step reaction: tyrosine is first activated by ATP to form Tyr-AMP and then transferred to the acceptor end of tRNA(Tyr). This is Tyrosine--tRNA ligase from Streptococcus pyogenes serotype M3 (strain SSI-1).